The sequence spans 169 residues: MVQLQNFFFFLIFLVVLCGTAAPILFQWLVSRDVSTGAPFFNGTIIPIFTSLLLVLVYIHSRGFMRSLDEAKRIVLIRARPILLPNIIEKSSPKKIQYISFFLDEKALSIFSFFRQFFFSFFVRQFPALCFVGQYFGFVVSHKTKSGTLSDSARALGPCCCFFILLLSN.

Its subcellular location is the mitochondrion. This is an uncharacterized protein from Marchantia polymorpha (Common liverwort).